A 429-amino-acid polypeptide reads, in one-letter code: MSEKSATVTFGGKSADLPVRSGSIGPDVVDIGSLYKQTTMFTYDPGFTSTASCESKITYIDGDEGVLLHRGFPIEQLAEHGDFLEVCYLLLYGELPTKAQKADFDYRVTHHTMVHEQMSRFFTGFRRDAHPMAVMCGCVGALSAFYHDSTDITDPHQRMVASLRMIAKMPTIAAMAYKYHIGQPFVYPKNDLDYASNFLRMCFAVPCEEYVVNPVLARAMDRIFILHADHEQNASTSTVRLAGSSGANPFACIAAGIACLWGPAHGGANEAALNMLAEIGTVDRIPEYITKAKDKNDPFRLMGFGHRVYKNYDPRAKIMQKTTHEVLAELGHKDDPLLEVAMELERIALTDEYFIEKKLYPNIDFYSGITLKALGFPTTMFTVLFALARTVGWIAQWNEMIEDPEQRIGRPRQLYVGAPLRDYVPISKR.

Catalysis depends on residues H306 and D364.

It belongs to the citrate synthase family.

The catalysed reaction is oxaloacetate + acetyl-CoA + H2O = citrate + CoA + H(+). It participates in carbohydrate metabolism; tricarboxylic acid cycle; isocitrate from oxaloacetate: step 1/2. In Rhizobium meliloti (strain 1021) (Ensifer meliloti), this protein is Citrate synthase (gltA).